A 400-amino-acid polypeptide reads, in one-letter code: Na(+)/H(+) antiporter NhaA 1 (400 aa).

11 consecutive transmembrane segments (helical) span residues 25-45 (IVLM…FSSM), 67-87 (ILHW…GMEI), 103-123 (ILPV…YALF), 130-150 (IIGW…ILSL), 159-179 (IIIF…IVIA), 184-204 (SEIS…IILA), 213-233 (WLYI…GVHE), 264-284 (VLTP…NSGI), 303-323 (IIFG…YILV), 339-359 (LYGA…VSSL), and 372-392 (ISII…FKII).

This sequence belongs to the NhaA Na(+)/H(+) (TC 2.A.33) antiporter family.

Its subcellular location is the cell membrane. It carries out the reaction Na(+)(in) + 2 H(+)(out) = Na(+)(out) + 2 H(+)(in). Its function is as follows. Na(+)/H(+) antiporter that extrudes sodium in exchange for external protons. This Clostridium beijerinckii (strain ATCC 51743 / NCIMB 8052) (Clostridium acetobutylicum) protein is Na(+)/H(+) antiporter NhaA 1.